The sequence spans 455 residues: Probable alpha-galactosidase B (455 aa).

An N-terminal signal peptide occupies residues 1 to 16; the sequence is MIEFLALITLISRANA. Disulfide bonds link cysteine 39/cysteine 71 and cysteine 121/cysteine 151. Asparagine 42 is a glycosylation site (N-linked (GlcNAc...) asparagine). Aspartate 149 (nucleophile) is an active-site residue. Asparagine 177 and asparagine 192 each carry an N-linked (GlcNAc...) asparagine glycan. 222-226 lines the substrate pocket; sequence NWGNA. Aspartate 244 acts as the Proton donor in catalysis. Asparagine 395 is a glycosylation site (N-linked (GlcNAc...) asparagine).

This sequence belongs to the glycosyl hydrolase 27 family.

The protein localises to the secreted. It carries out the reaction Hydrolysis of terminal, non-reducing alpha-D-galactose residues in alpha-D-galactosides, including galactose oligosaccharides, galactomannans and galactolipids.. Its function is as follows. Hydrolyzes a variety of simple alpha-D-galactoside as well as more complex molecules such as oligosaccharides and polysaccharides. The chain is Probable alpha-galactosidase B (aglB) from Emericella nidulans (strain FGSC A4 / ATCC 38163 / CBS 112.46 / NRRL 194 / M139) (Aspergillus nidulans).